The sequence spans 91 residues: Large ribosomal subunit protein bL27 (91 aa).

Residues 1–21 (MAHKKAGGSSRNGRDSESKRL) form a disordered region.

The protein belongs to the bacterial ribosomal protein bL27 family.

The sequence is that of Large ribosomal subunit protein bL27 from Azoarcus sp. (strain BH72).